The following is a 139-amino-acid chain: Large-conductance mechanosensitive channel (139 aa).

The next 2 helical transmembrane spans lie at 9–29 and 79–99; these read AFAV…GAAF and IQSV…VKAI.

Belongs to the MscL family. As to quaternary structure, homopentamer.

It is found in the cell inner membrane. In terms of biological role, channel that opens in response to stretch forces in the membrane lipid bilayer. May participate in the regulation of osmotic pressure changes within the cell. This Pseudomonas fluorescens (strain SBW25) protein is Large-conductance mechanosensitive channel.